A 1162-amino-acid chain; its full sequence is Protein OBERON 4 (1162 aa).

Basic and acidic residues-rich tracts occupy residues 1 to 19, 61 to 77, 90 to 99, and 118 to 134; these read MKRL…KNVD, NRDL…HRSE, FRSERERPNR, and VDDR…DRSL. Disordered regions lie at residues 1 to 235, 251 to 307, 321 to 346, and 441 to 485; these read MKRL…PSCS, IGKS…VSQN, DHRD…DKDE, and SKTE…QSGV. Residues 135–146 are compositionally biased toward polar residues; that stretch reads KSPSWSRDSPNE. Positions 148 to 157 are enriched in basic and acidic residues; that stretch reads SKFKPLDSRN. Over residues 163 to 182 the composition is skewed to polar residues; sequence KSLASPTWSKDSGSEQSKSV. Over residues 203–213 the composition is skewed to acidic residues; it reads EMEEGELEPEP. Composition is skewed to basic and acidic residues over residues 225 to 235, 263 to 300, 336 to 346, and 441 to 457; these read TKHDCKLPSCS, SNRE…HATE, DTVDEKGDKDE, and SKTE…KDDN. Residues 835–899 form a PHD-type zinc finger; the sequence is ACMCLVCSNF…QFHCVACNHP (65 aa). Positions 1065 to 1161 form a coiled coil; that stretch reads MKQAEAEMFQ…KMEMTKQSLA (97 aa).

As to quaternary structure, self-interacts. Interacts with OBE1 and OBE2. Interacts with OBE3.

It localises to the nucleus. Probable transcription factor that functions redundantly with OBE3 in specification of the hypophysis and establishment of the embryonic root. Involved in the activation of ARF5/MP-dependent gene expression during embryonic root meristem initiation. Involved in shoot meristem homeostasis. The protein is Protein OBERON 4 of Arabidopsis thaliana (Mouse-ear cress).